The chain runs to 493 residues: Aminotransferase swnA (493 aa).

This sequence belongs to the class-I pyridoxal-phosphate-dependent aminotransferase family. Pyridoxal 5'-phosphate is required as a cofactor.

It participates in mycotoxin biosynthesis. Its function is as follows. Aminotransferase; part of the gene cluster that mediates the biosynthesis of swainsonine (SW), a cytotoxic fungal alkaloid and a potential cancer therapy drug. Swainsonine production occurs via a multibranched pathway and is dispensable for fungal colonization of plants and infection of insect hosts. The first step of swainsonine biosynthesis is the production of the precursor pipecolic acid (PA) via conversion of L-lysine (Lys) to 1-piperideine-6-carboxylate (P6C) by the aminotransferase swnA, the latter being further reduced to PA by the reductase swnR. The PKS-NRPS hybrid synthetase swnK uptakes and condensates PA and malonyl-CoA with and without skipping of the ketoreductase (KR) domain in order to produce 3 intermediates, 1-oxoindolizidine, (1S)-1-hydroxyindolizin, and (1R)-1-hydroxyindolizine; with the transisomer (1S)-1-hydroxyindolizin being predominant. The terminal thioester reductase (TE) domain of swnK is involved in reduction of the thioester bond to release the intermediate aldehydes. The oxidoreductase swnN could contribute to the reduction of 1-oxoindolizidine to (1S)-1-hydroxyindolizin and (1R)-1-hydroxyindolizine, contributing to the major route of SW production. The dioxygenase swnH2 would be responsible for the oxidization of (1R)-1-hydroxyindolizine into (1R,2S)-1,2-dihydroxyindolizine and of (1S)-1-hydroxyindolizin to yield both (1R,2S)-1,2-dihydroxyindolizine and (1S,2S)-1,2-dihydroxyindolizine. The dioxygenase swnH1 then performs the conversion of the 1,2-dihydroxyindolizine epimers to SW. The protein is Aminotransferase swnA of Arthroderma benhamiae (strain ATCC MYA-4681 / CBS 112371) (Trichophyton mentagrophytes).